The primary structure comprises 206 residues: Small ribosomal subunit protein uS4 (206 aa).

An S4 RNA-binding domain is found at 96–156; it reads CRLDNVVYRM…EKSSNQLRIV (61 aa).

It belongs to the universal ribosomal protein uS4 family. In terms of assembly, part of the 30S ribosomal subunit. Contacts protein S5. The interaction surface between S4 and S5 is involved in control of translational fidelity.

In terms of biological role, one of the primary rRNA binding proteins, it binds directly to 16S rRNA where it nucleates assembly of the body of the 30S subunit. With S5 and S12 plays an important role in translational accuracy. This Pseudomonas putida (strain W619) protein is Small ribosomal subunit protein uS4.